Here is a 253-residue protein sequence, read N- to C-terminus: Major prion protein (253 aa).

Residues 1 to 22 (MANLGCWMLVLFVATWSDLGLC) form the signal peptide. The segment at 23–230 (KKRPKPGGWN…ESQAYYQRGS (208 aa)) is interaction with GRB2, ERI3 and SYN1. The interval 26–108 (PKPGGWNTGG…WHKPSKPKTS (83 aa)) is disordered. Tandem repeats lie at residues 51–59 (PQGGGGWGQ), 60–67 (PHGGGWGQ), 68–75 (PHGGGWGQ), 76–83 (PHGGGWGQ), and 84–91 (PHGGGWGQ). Positions 51–91 (PQGGGGWGQPHGGGWGQPHGGGWGQPHGGGWGQPHGGGWGQ) are 5 X 8 AA tandem repeats of P-H-G-G-G-W-G-Q. The span at 52–95 (QGGGGWGQPHGGGWGQPHGGGWGQPHGGGWGQPHGGGWGQGGGT) shows a compositional bias: gly residues. Cu(2+)-binding residues include His61, Gly62, Gly63, His69, Gly70, Gly71, His77, Gly78, Gly79, His85, Gly86, and Gly87. Residues 98 to 108 (QWHKPSKPKTS) show a composition bias toward basic residues. Cys179 and Cys214 are joined by a disulfide. 2 N-linked (GlcNAc...) asparagine glycosylation sites follow: Asn181 and Asn197. The GPI-anchor amidated serine moiety is linked to residue Ser230. A propeptide spans 231–253 (SMVLFSSPPVILLISFLIFLIVG) (removed in mature form).

It belongs to the prion family. Monomer and homodimer. Has a tendency to aggregate into amyloid fibrils containing a cross-beta spine, formed by a steric zipper of superposed beta-strands. Soluble oligomers may represent an intermediate stage on the path to fibril formation. Copper binding may promote oligomerization. Interacts with GRB2, APP, ERI3/PRNPIP and SYN1. Mislocalized cytosolically exposed PrP interacts with MGRN1; this interaction alters MGRN1 subcellular location and causes lysosomal enlargement. Interacts with KIAA1191.

Its subcellular location is the cell membrane. The protein localises to the golgi apparatus. Functionally, its primary physiological function is unclear. Has cytoprotective activity against internal or environmental stresses. May play a role in neuronal development and synaptic plasticity. May be required for neuronal myelin sheath maintenance. May play a role in iron uptake and iron homeostasis. Soluble oligomers are toxic to cultured neuroblastoma cells and induce apoptosis (in vitro). Association with GPC1 (via its heparan sulfate chains) targets PRNP to lipid rafts. Also provides Cu(2+) or Zn(2+) for the ascorbate-mediated GPC1 deaminase degradation of its heparan sulfate side chains. The sequence is that of Major prion protein (PRNP) from Macaca fascicularis (Crab-eating macaque).